Consider the following 789-residue polypeptide: MHCEVAEALSDKRPKEAPGAPGQGRGPVSLGAHMAFRIAVSGGGCGDGNPLDLLPRLPVPPPRAHDLLRPRSPRDYGVSKTGSGKVNGSYGHSSEKSLLDLDLAEGPSPSCHQGLFLPAGTPPPRGHPPVCEKLLHFPHPNRSPRPQATFVNGSLPAAQHIKQEALPDYQAMVSAHTPLPTHCRAPSSMGLPSDLDFPDRGLTNPAPSCYLLGNEPISDLGPQPEAHLPEGSLKRCCLLGLPPTSSASSSPCASSDINPVIHSSQTALVSCVNGLRSPPLPGDLGGPPKRSRPGPASSDGQEGSLQLEACRKSGFLKQEPMDEFSELFAPHHQGLPPPYPLPQLPTGPGLGGLGLGLAGRMVAGRQACRWVDCCAAYEQQEELVRHIEKSHIDQRKGEDFTCFWAGCVRRYKPFNARYKLLIHMRVHSGEKPNKCMFEGCSKAFSRLENLKIHLRSHTGEKPYLCQHPGCQKAFSNSSDRAKHQRTHLDTKPYACQIPGCSKRYTDPSSLRKHVKAHSAKEQQVRKKLHTGADPEADVLSECLSLQQLQASTLLPASRGKGSQTLSQELLPGVYPGSVTPQNGLASGILSPSHDVPSRHHPLEVPTGSHHHLSPLPTAESTRDGLGPSLLSPMVSPLKGLGPPPLPPASQSQSPGGQSFSTVPSKPTYPSFQSPPPLPSPQGYQGSFHSIQNCFPYADCYRATEPAASRDGLVGDAHGFNPLRPSTYSSLSTPLSAPGYETLAETPCPPALQPQPAEDLVPSGPEDCGFFPNGAFDHCLSHIPSIYTDT.

Composition is skewed to basic and acidic residues over residues 1-16 and 63-74; these read MHCEVAEALSDKRPKE and RAHDLLRPRSPR. Disordered regions lie at residues 1 to 29, 53 to 93, and 278 to 304; these read MHCEVAEALSDKRPKEAPGAPGQGRGPVS, LLPR…YGHS, and PPLPGDLGGPPKRSRPGPASSDGQEGS. The span at 80-92 shows a compositional bias: polar residues; sequence KTGSGKVNGSYGH. The segment at 366 to 391 adopts a C2H2-type 1 zinc-finger fold; the sequence is QACRWVDCCAAYEQQEELVRHIEKSH. The C2H2-type 2; atypical zinc-finger motif lies at 400–427; it reads FTCFWAGCVRRYKPFNARYKLLIHMRVH. 3 C2H2-type zinc fingers span residues 433–457, 463–487, and 493–517; these read NKCMFEGCSKAFSRLENLKIHLRSH, YLCQHPGCQKAFSNSSDRAKHQRTH, and YACQIPGCSKRYTDPSSLRKHVKAH. Disordered regions lie at residues 506–529 and 573–684; these read DPSSLRKHVKAHSAKEQQVRKKLH and VYPG…QGYQ. Residues 511–527 carry the Bipartite nuclear localization signal motif; it reads RKHVKAHSAKEQQVRKK. Residues 648-658 are compositionally biased toward low complexity; that stretch reads ASQSQSPGGQS.

It belongs to the GLI C2H2-type zinc-finger protein family. As to quaternary structure, interacts with KLF4. Interacts with POU5F1 and/or POU5F1B. Interacts with SOX2. As to expression, in the adult, expressed highly in placenta and kidney and at lower levels in the testis, brain, colon, brown fat tissue and thymus. During embryo development, expressed in the frontal nasal region, branchial arches, somites, vibrissal and hair follicles, limb buds, craniofacial regions, ventral part of the tail, intervertebral disks, teeth, eyes and kidney.

It localises to the nucleus. In terms of biological role, acts both as a repressor and an ctivator of transcription. Binds to the consensus sequence 5'-GACCACCCAC-3'. By controlling the expression of genes involved in cell differentiation inhibits the lineage commitment of multipotent cells. Prevents, for instance, the differentiation of multipotent mesenchymal cells into adipocyte and osteoblast. The protein is Zinc finger protein GLIS1 of Mus musculus (Mouse).